The sequence spans 100 residues: Small ribosomal subunit protein uS14c (100 aa).

The protein belongs to the universal ribosomal protein uS14 family. In terms of assembly, part of the 30S ribosomal subunit.

Its subcellular location is the plastid. The protein resides in the chloroplast. Its function is as follows. Binds 16S rRNA, required for the assembly of 30S particles. The protein is Small ribosomal subunit protein uS14c of Nephroselmis olivacea (Green alga).